The sequence spans 399 residues: MSDGDDAARRRTAAVTDYRKKLLHHKELESRVRTARENLRAAKKEFNKTEDDLKSLQSVGQIIGEVLRPLDNERLIVKASSGPRYVVGCRSKVDKEKLTSGTRVVLDMTTLTIMRALPREVDPVVYNMLHEDPGNISYSAVGGLGDQIRELRESIELPLMNPELFLRVGIKPPKGVLLYGPPGTGKTLLARAIASNIDANFLKVVSSAIIDKYIGESARLIREMFNYAREHQPCIIFMDEIDAIGGRRFSEGTSADREIQRTLMELLNQLDGFDQLGKVKMIMATNRPDVLDPALLRPGRLDRKIEIPLPNEQSRMEILKIHASGIAKHGEIDYEAIVKLGEGFNGADLRNICTEAGMFAIRAERDYVIHEDFMKAVRKLSEAKKLESSSHYNADFGKE.

180-187 (GPPGTGKT) is an ATP binding site. K203 is covalently cross-linked (Glycyl lysine isopeptide (Lys-Gly) (interchain with G-Cter in ubiquitin)).

The protein belongs to the AAA ATPase family. In terms of assembly, component of the 19S regulatory particle (RP/PA700) base subcomplex of the 26S proteasome. The 26S proteasome is composed of a core protease (CP), known as the 20S proteasome, capped at one or both ends by the 19S regulatory particle (RP/PA700). The RP/PA700 complex is composed of at least 17 different subunits in two subcomplexes, the base and the lid, which form the portions proximal and distal to the 20S proteolytic core, respectively.

It localises to the cytoplasm. The protein localises to the nucleus. In terms of biological role, the 26S proteasome is involved in the ATP-dependent degradation of ubiquitinated proteins. The regulatory (or ATPase) complex confers ATP dependency and substrate specificity to the 26S complex. In Arabidopsis thaliana (Mouse-ear cress), this protein is 26S proteasome regulatory subunit S10B homolog B (RPT4B).